Here is a 212-residue protein sequence, read N- to C-terminus: Large ribosomal subunit protein uL3 (212 aa).

The interval 136–155 is disordered; it reads THGNSLSHRSNGSIGQNQTP. At Gln153 the chain carries N5-methylglutamine.

The protein belongs to the universal ribosomal protein uL3 family. As to quaternary structure, part of the 50S ribosomal subunit. Forms a cluster with proteins L14 and L19. In terms of processing, methylated by PrmB.

Functionally, one of the primary rRNA binding proteins, it binds directly near the 3'-end of the 23S rRNA, where it nucleates assembly of the 50S subunit. The protein is Large ribosomal subunit protein uL3 of Shewanella oneidensis (strain ATCC 700550 / JCM 31522 / CIP 106686 / LMG 19005 / NCIMB 14063 / MR-1).